The following is a 264-amino-acid chain: MKYMITSKGDEKSDLLRLNMIAGFGEYDMEYDDVEPEIVISIGGDGTFLSAFHQYEERLDEIAFIGIHTGHLGFYADWRPAEANKLVKLVAKGEYQKVSYPLLKTTVKYGIGKKEATYLALNESTVKSSGGPFVVDVVINDIHFERFRGDGLCMSTPSGTTAYNKSLGGALMHPSIEAMQLTEMASINNRVYRTIGSPLVFPKHHVVSLQPVNDKDFQISVDHLSILHRDVQEIRYEVSAKKIHFARFKSFPFWRRVHDSFIED.

Asp-45 functions as the Proton acceptor in the catalytic mechanism. Residues 45–46, 122–123, Arg-148, Asp-150, 161–166, and Ala-185 contribute to the NAD(+) site; these read DG, NE, and TAYNKS.

This sequence belongs to the NAD kinase family. It depends on a divalent metal cation as a cofactor.

It is found in the cytoplasm. The catalysed reaction is NAD(+) + ATP = ADP + NADP(+) + H(+). Functionally, involved in the regulation of the intracellular balance of NAD and NADP, and is a key enzyme in the biosynthesis of NADP. Catalyzes specifically the phosphorylation on 2'-hydroxyl of the adenosine moiety of NAD to yield NADP. This chain is NAD kinase 1, found in Listeria monocytogenes serotype 4b (strain F2365).